The chain runs to 1007 residues: Glutamate receptor ionotropic, delta-2 (1007 aa).

The N-terminal stretch at 1-23 is a signal peptide; that stretch reads MEVFPLLFFLSFWWSRTWDLATS. The interval 24–345 is interaction with CBLN1 homotrimer; sequence DSIIHIGAIF…NAFHKKLEDR (322 aa). Topologically, residues 24 to 566 are extracellular; that stretch reads DSIIHIGAIF…DMFACLAPFD (543 aa). Cystine bridges form between Cys-83/Cys-355, Cys-99/Cys-131, and Cys-298/Cys-310. Asn-293 carries N-linked (GlcNAc...) asparagine glycosylation. The N-linked (GlcNAc...) asparagine glycan is linked to Asn-426. A helical membrane pass occupies residues 567 to 587; it reads LSLWACIAGTVLLVGLLVYLL. At 588–635 the chain is on the cytoplasmic side; it reads NWLNPPRLQMGSMTSTTLYNSMWFVYGSFVQQGGEVPYTTLATRMMMG. Residues 636–656 form a helical membrane-spanning segment; that stretch reads AWWLFALIVISSYTANLAAFL. Residues 657–830 are Extracellular-facing; the sequence is TITRIESSIQ…QKGGALDIKS (174 aa). Residues Asn-713 and Asn-716 are each glycosylated (N-linked (GlcNAc...) asparagine). Residues 831–851 form a helical membrane-spanning segment; that stretch reads LAGVFCILAAGIVLSCLIAVL. Over 852–1007 the chain is Cytoplasmic; that stretch reads ETWWSRRKGS…GNDPDRGTSI (156 aa). Ser-883 bears the Phosphoserine mark. Thr-886 carries the phosphothreonine modification. A Phosphoserine modification is found at Ser-890. The interaction with AP4M1 stretch occupies residues 921–991; that stretch reads DFRNTHITTT…MSSIPYQPTP (71 aa). The PDZ-binding signature appears at 1005–1007; the sequence is TSI. Phosphoserine is present on Ser-1006.

It belongs to the glutamate-gated ion channel (TC 1.A.10.1) family. GRID2 subfamily. In terms of assembly, tetramer; dimer of dimers. Interacts with AP4M1. Interacts with EML2. Interacts with MAGI2 (via PDZ domains). Interacts with BECN1, GOPC, GRID2IP, SHANK1 and SHANK2. Interacts with CBLN2, but not with CBLN4. Interacts with CBLN1 (via C1q domain); the interaction is CBLN1-NRX1 complex formation-dependent; CBLN1-binding is calcium-independent; CBLN1 hexamers anchor GRID2 N-terminal domain dimers to monomeric NRXN1 isoform beta; promotes synaptogenesis and mediates the D-Serine-dependent long term depression signals and AMPA receptor endocytosis. In terms of tissue distribution, expressed at high levels in the cerebellar Purkinje cell layer, almost absent in the forebrain.

The protein localises to the postsynaptic cell membrane. The enzyme catalyses Ca(2+)(in) = Ca(2+)(out). It catalyses the reaction Na(+)(in) = Na(+)(out). In terms of biological role, member of the ionotropic glutamate receptor family, which plays a crucial role in synaptic organization and signal transduction in the central nervous system. Although it shares structural features with ionotropic glutamate receptors, does not bind glutamate as a primary ligand. Promotes synaptogenesis and mediates the D-Serine-dependent long term depression signals and AMPA receptor endocytosis of cerebellar parallel fiber-Purkinje cell (PF-PC) synapses through the NRX1B-CBLN1-GRID2 triad complex. In the presence of neurexins and cerebellins, forms cation-selective channels that are proposed to be gated by glycine and D-serine. However, recent research disputes this ligand-gated cation channel activity. Cation-selective ion channel activity can be triggered by GRM1 in Purkinje cells. This Rattus norvegicus (Rat) protein is Glutamate receptor ionotropic, delta-2 (Grid2).